A 236-amino-acid chain; its full sequence is MICOS complex subunit MIC25 (236 aa).

Residues 1–11 (MGSAESREGRR) are compositionally biased toward basic and acidic residues. The segment at 1 to 22 (MGSAESREGRRASFGMDEEERV) is disordered. The N-myristoyl glycine moiety is linked to residue G2. 2 positions are modified to phosphoserine: S13 and S31. Disordered regions lie at residues 34 to 86 (VVNR…VQVD) and 109 to 132 (EREA…DQEK). Positions 48-58 (GLLAPPAAALG) are enriched in low complexity. Basic and acidic residues-rich tracts occupy residues 62-71 (GREKDSKPPR) and 122-132 (RRGEGGVDQEK). A coiled-coil region spans residues 127–167 (GVDQEKQRLAQRARELESQEEELRCRDAFYKEQLGRLERQN). The 42-residue stretch at 195-236 (EPVCSGLQAQILRCYRDRLQEVLLCADLVRAYQHCVSSAHKG) folds into the CHCH domain. 2 consecutive short sequence motifs (cx9C motif) follow at residues 198-208 (CSGLQAQILRC) and 219-229 (CADLVRAYQHC). Disulfide bonds link C198–C229 and C208–C219.

The protein belongs to the MICOS complex subunit Mic19 family. Metazoan Mic25 subfamily. Component of the mitochondrial contact site and cristae organizing system (MICOS) complex, composed of at least MICOS10/MIC10, CHCHD3/MIC19, CHCHD6/MIC25, APOOL/MIC27, IMMT/MIC60, APOO/MIC23/MIC26 and MICOS13/MIC13. This complex was also known under the names MINOS or MitOS complex. The MICOS complex associates with mitochondrial outer membrane proteins SAMM50, MTX1 and MTX2 (together described as components of the mitochondrial outer membrane sorting assembly machinery (SAM) complex) and DNAJC11, mitochondrial inner membrane protein TMEM11 and with HSPA9. The MICOS and SAM complexes together with DNAJC11 are part of a large protein complex spanning both membranes termed the mitochondrial intermembrane space bridging (MIB) complex. Interacts with DISC1. Interacts with IMMT/MIC60.

Its subcellular location is the mitochondrion inner membrane. It is found in the mitochondrion. Functionally, component of the MICOS complex, a large protein complex of the mitochondrial inner membrane that plays crucial roles in the maintenance of crista junctions, inner membrane architecture, and formation of contact sites to the outer membrane. The sequence is that of MICOS complex subunit MIC25 (CHCHD6) from Bos taurus (Bovine).